A 412-amino-acid polypeptide reads, in one-letter code: Protein arginine N-methyltransferase 2 (412 aa).

The region spanning T190 to A412 is the RMT2 domain. S-adenosyl-L-methionine contacts are provided by residues Y197, M227, F250 to I255, E271 to H273, W298 to Q299, and D319.

Belongs to the class I-like SAM-binding methyltransferase superfamily. RMT2 methyltransferase family. Monomer.

Its subcellular location is the cytoplasm. The protein localises to the nucleus. S-adenosyl-L-methionine-dependent protein-arginine N-methyltransferase that methylates the delta-nitrogen atom of arginine residues to form N5-methylarginine (type IV) in target proteins. Monomethylates ribosomal protein L12. The chain is Protein arginine N-methyltransferase 2 from Candida glabrata (strain ATCC 2001 / BCRC 20586 / JCM 3761 / NBRC 0622 / NRRL Y-65 / CBS 138) (Yeast).